The sequence spans 2586 residues: Highly reducing polyketide synthase FUM1 (2586 aa).

In terms of domain architecture, Ketosynthase family 3 (KS3) spans 29-451; sequence VLPVAIVGMG…GANAHCIIET (423 aa). Catalysis depends on for beta-ketoacyl synthase activity residues C201, H336, and H374. A malonyl-CoA:ACP transacylase (MAT) domain region spans residues 609–928; the sequence is IFTGQGAQWV…TESLLKLAGE (320 aa). An N-terminal hotdog fold region spans residues 980 to 1111; that stretch reads HELLGSRTLE…GQVRPGQDAH (132 aa). Positions 980–1269 are dehydratase (DH) domain; that stretch reads HELLGSRTLE…LEDGKFSPLE (290 aa). The 295-residue stretch at 980 to 1274 folds into the PKS/mFAS DH domain; sequence HELLGSRTLE…FSPLEMDLAE (295 aa). Catalysis depends on H1012, which acts as the Proton acceptor; for dehydratase activity. A C-terminal hotdog fold region spans residues 1125 to 1274; sequence QHYPRLVDNL…FSPLEMDLAE (150 aa). The Proton donor; for dehydratase activity role is filled by D1186. A methyltransferase (CMet) domain region spans residues 1450-1627; that stretch reads DFFATAGHTR…GFSGVDSAIY (178 aa). Positions 1862-2172 are enoyl reductase (ER) (ER) domain; sequence GLLQTLGWVP…KGVHLGKIVV (311 aa). Residues 2197–2373 form a ketoreductase (KR) domain region; that stretch reads ASYLLVGGLG…ASVLQIGLIE (177 aa). One can recognise a Carrier domain in the interval 2486 to 2565; the sequence is PATVELVTNE…GLARLTVDGL (80 aa). S2524 bears the O-(pantetheine 4'-phosphoryl)serine mark.

Its pathway is mycotoxin biosynthesis. Functionally, highly reducing polyketide synthase; part of the gene cluster that mediates the biosynthesis of fumonisins B1 (FB1), B2 (FB2), B3 (FB3), and B4 (FB4), which are carcinogenic mycotoxins. The biosynthesis starts with the FUM1-catalyzed carbon chain assembly from one molecule of acetyl-CoA, eight molecules of malonyl-CoA, and two molecules of methionine (in S-adenosyl form). The C18 polyketide chain is released from the enzyme by a nucleophilic attack of a carbanion, which is derived from R-carbon of alanine by decarboxylation, on the carbonyl carbon of polyketide acyl chain. This step is catalyzed by the pyridoxal 5'-phosphate-dependent aminoacyl transferase FUM8. The resultant 3-keto intermediate is then stereospecifically reduced to a 3-hydroxyl product by reductase FUM13. Subsequent oxidations at C-10 by the cytochrome P450 monooxygenase FUM2, C-14 and C-15 by FUM6, FUM12 or FUM15, tricarballylic esterification of the hydroxyl groups on C-14 and C-15 by acyltransferase FUM14, and C-5 hydroxylation by 2-keto-glutarate-dependent dioxygenase FUM3 furnish the biosynthesis of fumonisins. The tricarballylic moieties are most likely derived from the citric acid cycle, and their addition to the carbon backbone may involve FUM7, FUM10, FUM11 and FUM14. The protein is Highly reducing polyketide synthase FUM1 of Gibberella moniliformis (strain M3125 / FGSC 7600) (Maize ear and stalk rot fungus).